A 107-amino-acid polypeptide reads, in one-letter code: Replication initiation control protein YabA (107 aa).

Positions 81, 83, 97, and 100 each coordinate Zn(2+).

It belongs to the YabA family. Homotetramer. Interacts with both DnaA and DnaN, acting as a bridge between these two proteins. Requires Zn(2+) as cofactor.

The protein localises to the cytoplasm. It localises to the nucleoid. In terms of biological role, involved in control of chromosome replication initiation. Inhibits the cooperative binding of DnaA to the oriC region, thus negatively regulating initiation of chromosome replication. Inhibits the ability of DnaA-ATP to form a helix on DNA; does not disassemble preformed DnaA-DNA helices. Decreases the residence time of DnaA on the chromosome at its binding sites (oriC, replication forks and promoter-binding sites). Tethers DnaA to the replication machinery via the DNA polymerase beta sliding clamp subunit (dnaN). Associates with oriC and other DnaA targets on the chromosome in a DnaA-dependent manner. This is Replication initiation control protein YabA from Streptococcus equi subsp. equi (strain 4047).